Reading from the N-terminus, the 377-residue chain is Palmitoyltransferase ZDHHC16 (377 aa).

The Cytoplasmic segment spans residues 1 to 77 (MRGQRSLLLG…VYWLVDNVIR (77 aa)). Residues 78 to 98 (WFGVVFVVLVIVLTGSIVAIA) form a helical membrane-spanning segment. Residues 99–116 (YLCVLPLILRTYSVPRLC) lie on the Lumenal side of the membrane. Residues 117-137 (WHFFYSHWNLILIVFHYYQAI) traverse the membrane as a helical segment. Residues 138–198 (TTPPGYPPQG…NNCVGHYNHR (61 aa)) are Cytoplasmic-facing. The region spanning 155–205 (SICKKCIYPKPARTHHCSICNRCVLKMDHHCPWLNNCVGHYNHRYFFSFCF) is the DHHC domain. C185 (S-palmitoyl cysteine intermediate) is an active-site residue. A helical transmembrane segment spans residues 199-219 (YFFSFCFFMTLGCVYCSYGSW). The Lumenal portion of the chain corresponds to 220–266 (DLFREAYAAIEKMKQLDKNKLQAVANQTYHQTPPPIFSFRERMTHKS). Residues 267–287 (LVYLWFLCSSVALALGALTVW) form a helical membrane-spanning segment. Over 288–377 (HAVLISRGET…TAHSASVMAV (90 aa)) the chain is Cytoplasmic.

The protein belongs to the DHHC palmitoyltransferase family. As to quaternary structure, interacts with ABL1. Interacts with COPS5/JAB1.

The protein resides in the endoplasmic reticulum membrane. The catalysed reaction is L-cysteinyl-[protein] + hexadecanoyl-CoA = S-hexadecanoyl-L-cysteinyl-[protein] + CoA. Functionally, palmitoyl acyltransferase that mediates palmitoylation of proteins such as PLN and ZDHHC6. Required during embryonic heart development and cardiac function, possibly by mediating palmitoylation of PLN, thereby affecting PLN phosphorylation and homooligomerization. Also required for eye development. Palmitoylates ZDHHC6, affecting the quaternary assembly of ZDHHC6, its localization, stability and function. May play a role in DNA damage response. May be involved in apoptosis regulation. Involved in the proliferation of neural stem cells by regulating the FGF/ERK pathway. This chain is Palmitoyltransferase ZDHHC16, found in Macaca fascicularis (Crab-eating macaque).